The sequence spans 388 residues: Protochlorophyllide reductase A, chloroplastic (388 aa).

A chloroplast-targeting transit peptide spans 1–74; it reads MALQLLPSTL…SPSGKKTLRQ (74 aa). The segment covering 48 to 68 has biased composition (low complexity); that stretch reads VATAPSPVTTSPGSTASSPSG. The interval 48–69 is disordered; sequence VATAPSPVTTSPGSTASSPSGK.

This sequence belongs to the short-chain dehydrogenases/reductases (SDR) family. POR subfamily.

It localises to the plastid. It is found in the chloroplast. The catalysed reaction is chlorophyllide a + NADP(+) = protochlorophyllide a + NADPH + H(+). The protein operates within porphyrin-containing compound metabolism; chlorophyll biosynthesis. Functionally, phototransformation of protochlorophyllide (Pchlide) to chlorophyllide (Chlide). The chain is Protochlorophyllide reductase A, chloroplastic (PORA) from Hordeum vulgare (Barley).